The chain runs to 872 residues: Alanine--tRNA ligase (872 aa).

Positions 567, 571, 669, and 673 each coordinate Zn(2+).

The protein belongs to the class-II aminoacyl-tRNA synthetase family. Requires Zn(2+) as cofactor.

The protein resides in the cytoplasm. The catalysed reaction is tRNA(Ala) + L-alanine + ATP = L-alanyl-tRNA(Ala) + AMP + diphosphate. Functionally, catalyzes the attachment of alanine to tRNA(Ala) in a two-step reaction: alanine is first activated by ATP to form Ala-AMP and then transferred to the acceptor end of tRNA(Ala). Also edits incorrectly charged Ser-tRNA(Ala) and Gly-tRNA(Ala) via its editing domain. The sequence is that of Alanine--tRNA ligase from Streptococcus agalactiae serotype III (strain NEM316).